The following is a 333-amino-acid chain: Ribose-phosphate pyrophosphokinase (333 aa).

58–60 (DGE) contacts ATP. Mg(2+) is bound by residues His-151 and Asp-190. Lys-214 is an active-site residue. D-ribose 5-phosphate contacts are provided by residues Arg-216, Asp-240, and 244-248 (DTAGT).

It belongs to the ribose-phosphate pyrophosphokinase family. Class I subfamily. Homohexamer. Requires Mg(2+) as cofactor.

It is found in the cytoplasm. The catalysed reaction is D-ribose 5-phosphate + ATP = 5-phospho-alpha-D-ribose 1-diphosphate + AMP + H(+). Its pathway is metabolic intermediate biosynthesis; 5-phospho-alpha-D-ribose 1-diphosphate biosynthesis; 5-phospho-alpha-D-ribose 1-diphosphate from D-ribose 5-phosphate (route I): step 1/1. Functionally, involved in the biosynthesis of the central metabolite phospho-alpha-D-ribosyl-1-pyrophosphate (PRPP) via the transfer of pyrophosphoryl group from ATP to 1-hydroxyl of ribose-5-phosphate (Rib-5-P). This chain is Ribose-phosphate pyrophosphokinase, found in Synechocystis sp. (strain ATCC 27184 / PCC 6803 / Kazusa).